Consider the following 164-residue polypeptide: Serine/arginine-rich splicing factor 3 (164 aa).

The residue at position 1 (M1) is an N-acetylmethionine. Positions 1-90 (MHRDSCPLDC…SNGEKRSRNR (90 aa)) are sufficient for interaction with NXF1 and SRSP. Residue S5 is modified to Phosphoserine. The RRM domain maps to 10-83 (CKVYVGNLGN…CRVRVELSNG (74 aa)). Residue K23 is modified to N6-acetyllysine. Residues 81 to 164 (SNGEKRSRNR…RSRSRSNERK (84 aa)) are disordered. A compositionally biased stretch (basic residues) spans 107–128 (RSPPPRRRSPRRRSFSRSRSRS). The stretch at 119–133 (RSFSRSRSRSLSRDR) is one B-1 repeat. Positions 119–164 (RSFSRSRSRSLSRDRRRERSLSRERNHKPSRSFSRSRSRSRSNERK) are 2 X approximate repeats, basic. The span at 129 to 142 (LSRDRRRERSLSRE) shows a compositional bias: basic and acidic residues. Positions 143-158 (RNHKPSRSFSRSRSRS) are enriched in basic residues. Residues 149–164 (RSFSRSRSRSRSNERK) form a B-2 repeat.

This sequence belongs to the splicing factor SR family. In terms of assembly, interacts with CPSF6. Interacts with RBMY1A1. Interacts with SREK1/SFRS12. Interacts with NXF1. Interacts with YTHDC1, leading to recruitment to RNA elements adjacent to m6A sites. Interacts with SRSP; increases SRSF3 binding to specific exons. In terms of processing, phosphorylated by CLK1, CLK2, CLK3 and CLK4. Extensively phosphorylated on serine residues in the RS domain.

It is found in the nucleus. It localises to the nucleus speckle. Its subcellular location is the cytoplasm. Functionally, splicing factor, which binds the consensus motif 5'-C[ACU][AU]C[ACU][AC]C-3' within pre-mRNA and promotes specific exons inclusion during alternative splicing. Interaction with YTHDC1, a RNA-binding protein that recognizes and binds N6-methyladenosine (m6A)-containing RNAs, promotes recruitment of SRSF3 to its mRNA-binding elements adjacent to m6A sites within exons. Also functions as an adapter involved in mRNA nuclear export. Binds mRNA which is thought to be transferred to the NXF1-NXT1 heterodimer for export (TAP/NXF1 pathway); enhances NXF1-NXT1 RNA-binding activity. Involved in nuclear export of m6A-containing mRNAs via interaction with YTHDC1: interaction with YTHDC1 facilitates m6A-containing mRNA-binding to both SRSF3 and NXF1, promoting mRNA nuclear export. The sequence is that of Serine/arginine-rich splicing factor 3 (SRSF3) from Bos taurus (Bovine).